Here is a 763-residue protein sequence, read N- to C-terminus: Eukaryotic translation initiation factor 3 subunit B (763 aa).

Residues 1-136 (MKNFLPRTLK…LFVECGSMND (136 aa)) are sufficient for interaction with HCR1 and TIF32. Positions 28-261 (RNTQLKRSKI…GVTAWGGPNF (234 aa)) are sufficient for interaction with PIC8. S61 carries the phosphoserine modification. Y67 carries the phosphotyrosine modification. The region spanning 77–162 (QYIVVNGAPV…HRLFLYTMKD (86 aa)) is the RRM domain. 6 WD repeats span residues 228-266 (RENW…RLRR), 277-325 (VSPN…LMAT), 373-416 (LKPS…SACT), 484-524 (ELKD…IRFY), 544-589 (IPKT…EKNI), and 605-650 (PTYS…VKED). Phosphoserine is present on S669.

Belongs to the eIF-3 subunit B family. In terms of assembly, the eukaryotic translation initiation factor 3 (eIF-3) core complex is composed of TIF32, PRT1, NIP1, TIF34 and TIF35. A subcomplex of TIF32, NIP1 and PRT1 mediates the interaction with eIF-1, TIF5/eIF-5 and HCR1. The factors eIF-1, eIF-2, eIF-3, TIF5/eIF-5 and methionyl-tRNAi form a multifactor complex (MFC) that may bind to the 40S ribosome.

It localises to the cytoplasm. Its function is as follows. RNA-binding component of the eukaryotic translation initiation factor 3 (eIF-3) complex, which is involved in protein synthesis of a specialized repertoire of mRNAs and, together with other initiation factors, stimulates binding of mRNA and methionyl-tRNAi to the 40S ribosome. The eIF-3 complex specifically targets and initiates translation of a subset of mRNAs involved in cell proliferation. The sequence is that of Eukaryotic translation initiation factor 3 subunit B from Saccharomyces cerevisiae (strain ATCC 204508 / S288c) (Baker's yeast).